We begin with the raw amino-acid sequence, 241 residues long: Pyridoxal phosphate phosphatase PHOSPHO2 (241 aa).

Catalysis depends on Asp-8, which acts as the Nucleophile. The Mg(2+) site is built by Asp-8 and Asp-10. Asp-10 (proton donor) is an active-site residue. Residues Asp-19 and Asp-99 each contribute to the substrate site. A Mg(2+)-binding site is contributed by Asp-179.

It belongs to the HAD-like hydrolase superfamily. PHOSPHO family. It depends on Mg(2+) as a cofactor.

It carries out the reaction pyridoxal 5'-phosphate + H2O = pyridoxal + phosphate. In terms of biological role, phosphatase that has high activity toward pyridoxal 5'-phosphate (PLP). Also active at much lower level toward pyrophosphate, phosphoethanolamine (PEA), phosphocholine (PCho), phospho-l-tyrosine, fructose-6-phosphate, p-nitrophenyl phosphate, and h-glycerophosphate. In Homo sapiens (Human), this protein is Pyridoxal phosphate phosphatase PHOSPHO2 (PHOSPHO2).